We begin with the raw amino-acid sequence, 128 residues long: Cionin (128 aa).

A signal peptide spans methionine 1–valine 22. A propeptide spanning residues proline 23 to arginine 108 is cleaved from the precursor. Sulfotyrosine occurs at positions 110 and 111. Phenylalanine 116 carries the post-translational modification Phenylalanine amide. Residues alanine 120–tyrosine 128 constitute a propeptide that is removed on maturation.

The protein belongs to the gastrin/cholecystokinin family. Expressed in both the gut and the neural ganglion.

The protein resides in the secreted. This chain is Cionin, found in Ciona intestinalis (Transparent sea squirt).